The sequence spans 187 residues: Basic helix-loop-helix transcription factor scleraxis (187 aa).

Disordered stretches follow at residues 21–83 (LSED…TNSV) and 140–163 (AFFH…QPKQ). A compositionally biased stretch (basic and acidic residues) spans 34–43 (SDEKPFHLDA). Over residues 50 to 72 (AGKRRSGKKAGRLHREPRQRHTA) the composition is skewed to basic residues. Residues 67-119 (RQRHTANARERDRTNSVNTAFTALRTLIPTEPADRKLSKIETLRLASSYISHL) form the bHLH domain.

Efficient DNA binding requires dimerization with another bHLH protein. Dimerizes and binds the E-box consensus sequence with E12. In terms of tissue distribution, expressed in the intersomitic, the superficial proximomedial limb mesenchyme and the subectodermal mesenchyme.

The protein resides in the nucleus. Its function is as follows. Plays an early essential role in mesoderm formation, as well as a later role in formation of somite-derived chondrogenic lineages. The chain is Basic helix-loop-helix transcription factor scleraxis (SCX) from Gallus gallus (Chicken).